The chain runs to 723 residues: Zinc finger protein 750 (723 aa).

A CCHC-type zinc finger spans residues 25–51; sequence YKCFQCPFTCNEKSHLFNHMKYGLCKN. 4 residues coordinate Zn(2+): Cys-27, Cys-30, His-43, and Cys-49. Disordered stretches follow at residues 64–91, 132–153, 359–427, 466–630, and 650–723; these read KCPK…SKSV, LHRA…QPAL, ASSP…SQTC, PAQA…SEEQ, and RVGD…ARVS. Residues 67–91 are compositionally biased toward polar residues; sequence KSNSLDPKQTNQPDATAKPASSKSV. The segment covering 360–369 has biased composition (polar residues); it reads SSPSRLNPSD. Basic and acidic residues predominate over residues 370-397; sequence PNRKHVEFESPIPEAKDSSKAGQRDTEG. Residues 470–482 show a composition bias toward polar residues; that stretch reads AETTAESPVSLNV. The span at 500–509 shows a compositional bias: low complexity; sequence AAPSSPDDSS. Residues 530 to 545 are compositionally biased toward polar residues; that stretch reads PTYQGSPQAETASFSE. Low complexity-rich tracts occupy residues 563 to 582 and 606 to 616; these read APRP…AAVP and GDGAPPTGPGE. A compositionally biased stretch (polar residues) spans 666–678; that stretch reads DTPTLSSMESQEA.

As to expression, expressed in the skin, prostate, lung, placenta and thymus, and at low level in T-cells. Not expressed in peripheral blood leukocytes, pancreas and brain. Clearly expressed in primary keratinocytes but not in fibroblasts.

It is found in the nucleus. Functionally, transcription factor involved in epidermis differentiation. Required for terminal epidermal differentiation: acts downstream of p63/TP63 and activates expression of late epidermal differentiation genes. Specifically binds to the promoter of KLF4 and promotes its expression. The sequence is that of Zinc finger protein 750 (ZNF750) from Homo sapiens (Human).